The sequence spans 795 residues: ATP-dependent RNA helicase DHX15 (795 aa).

Residues 1 to 111 (MSKRHRLDLG…HTGHTGHTSL (111 aa)) form a disordered region. A Phosphoserine modification is found at serine 15. Residues 20–62 (AGTDGKDRERDRDREDRSKDRDRERDRGDREREREKEKEKELR) show a composition bias toward basic and acidic residues. Over residues 79–110 (ASHSAHSTHSAHSTHSTHSAHSTHTGHTGHTS) the composition is skewed to low complexity. Positions 147–313 (TDILVRHQSF…FDNCPLLTIP (167 aa)) constitute a Helicase ATP-binding domain. 160 to 167 (GETGSGKT) is an ATP binding site. Residues 260-263 (DEAH) carry the DEAH box motif. One can recognise a Helicase C-terminal domain in the interval 338-518 (TVIQIHMCEE…SVVLQLKKLG (181 aa)). Lysine 488 carries the post-translational modification N6-acetyllysine. Lysine 786 is covalently cross-linked (Glycyl lysine isopeptide (Lys-Gly) (interchain with G-Cter in SUMO2)).

It belongs to the DEAD box helicase family. DEAH subfamily. DDX15/PRP43 sub-subfamily. Component of the U11/U12 snRNPs that are part of the U12-type spliceosome. Identified in the Intron Large spliceosome complex (IL, also named intron lariat spliceosome), a post-mRNA release spliceosomal complex containing the excised intron, U2, U5 and U6 snRNPs, and splicing factors; the association may be transient. The IL complex exists in two distinct conformations, one with the DHX15 (ILS2) and one without (ILS1). Interacts with TFIP11 (via G-patch domain); indicative for a recruitment to the IL complex. Interacts with SSB/La. Interacts with GPATCH2 (via G-patch domain); promoting the RNA helicase activity. Interacts with NKRF (via G-patch domain); promoting the RNA helicase activity. Interacts with NLRP6. As to expression, ubiquitous.

It localises to the nucleus. It is found in the nucleolus. It carries out the reaction ATP + H2O = ADP + phosphate + H(+). Its activity is regulated as follows. ATPase activity is enhanced upon binding to G-patch domain-containing proteins. G-patch domain-containing proteins act like a brace that tethers mobile sections of DHX15 together, stabilizing a functional conformation with high RNA affinity, thereby promoting the ATPase activity. Functionally, RNA helicase involved in mRNA processing and antiviral innate immunity. Pre-mRNA processing factor involved in disassembly of spliceosomes after the release of mature mRNA. In cooperation with TFIP11 seem to be involved in the transition of the U2, U5 and U6 snRNP-containing IL complex to the snRNP-free IS complex leading to efficient debranching and turnover of excised introns. Plays a key role in antiviral innate immunity by promoting both MAVS-dependent signaling and NLRP6 inflammasome. Acts as an RNA virus sensor: recognizes and binds viral double stranded RNA (dsRNA) and activates the MAVS-dependent signaling to produce interferon-beta and interferon lambda-3 (IFNL3). Involved in intestinal antiviral innate immunity together with NLRP6: recognizes and binds viral dsRNA and promotes activation of the NLRP6 inflammasome in intestinal epithelial cells to restrict infection by enteric viruses. The NLRP6 inflammasome acts by promoting maturation and secretion of IL18 in the extracellular milieu. Also involved in antibacterial innate immunity by promoting Wnt-induced antimicrobial protein expression in Paneth cells. The sequence is that of ATP-dependent RNA helicase DHX15 from Mus musculus (Mouse).